The primary structure comprises 836 residues: V-type proton ATPase subunit C (836 aa).

Residues L116 to Q144 show a composition bias toward basic residues. 4 disordered regions span residues L116–P169, A302–S403, K415–N453, and P496–P544. Over residues A160 to P169 the composition is skewed to pro residues. Residues A302–S316 are compositionally biased toward low complexity. Polar residues-rich tracts occupy residues K319–T348 and T364–S374. Low complexity predominate over residues A425–Q450. Polar residues predominate over residues P496 to H511. Positions R512–S529 are enriched in low complexity.

It belongs to the V-ATPase C subunit family. In terms of assembly, V-ATPase is a heteromultimeric enzyme made up of two complexes: the ATP-hydrolytic V1 complex and the proton translocation V0 complex. The V1 complex consists of three catalytic AB heterodimers that form a heterohexamer, three peripheral stalks each consisting of EG heterodimers, one central rotor including subunits D and F, and the regulatory subunits C and H. The proton translocation complex V0 consists of the proton transport subunit a, a ring of proteolipid subunits c9c'', rotary subunit d, subunits e and f, and the accessory subunits VhaAC45 and ATP6AP2. In larvae, expressed in the ring gland, CNS, imaginal disks and lymph gland.

Subunit of the V1 complex of vacuolar(H+)-ATPase (V-ATPase), a multisubunit enzyme composed of a peripheral complex (V1) that hydrolyzes ATP and a membrane integral complex (V0) that translocates protons. V-ATPase is responsible for acidifying and maintaining the pH of intracellular compartments and in some cell types, is targeted to the plasma membrane, where it is responsible for acidifying the extracellular environment. Subunit C is necessary for the assembly of the catalytic sector of the enzyme and is likely to have a specific function in its catalytic activity. In enterocytes, acts as part of a pHCl-2 sensory pathway which mediates Tor-dependent larval growth and metabolism in response to zinc availability. Likely acts in maintaining enterocyte lysosomal acidification which consequently promotes Tor activation at the lysosome membrane. The polypeptide is V-type proton ATPase subunit C (Vha44) (Drosophila melanogaster (Fruit fly)).